The chain runs to 565 residues: NAD-dependent malic enzyme (565 aa).

The active-site Proton donor is tyrosine 104. Position 157 (arginine 157) interacts with NAD(+). Lysine 175 (proton acceptor) is an active-site residue. 3 residues coordinate a divalent metal cation: glutamate 246, aspartate 247, and aspartate 270. Positions 270 and 418 each coordinate NAD(+).

It belongs to the malic enzymes family. In terms of assembly, homotetramer. Mg(2+) serves as cofactor. The cofactor is Mn(2+).

The catalysed reaction is (S)-malate + NAD(+) = pyruvate + CO2 + NADH. It catalyses the reaction oxaloacetate + H(+) = pyruvate + CO2. The protein is NAD-dependent malic enzyme of Klebsiella pneumoniae subsp. pneumoniae (strain ATCC 700721 / MGH 78578).